Reading from the N-terminus, the 240-residue chain is Ribonuclease 3 (240 aa).

The region spanning 4–134 (SRQPLLDALG…LLGAIYLQHG (131 aa)) is the RNase III domain. Mg(2+) is bound at residue Glu44. Residue Asp48 is part of the active site. Residues Asp120 and Glu123 each coordinate Mg(2+). The active site involves Glu123. Residues 161–229 (DWKTSLQELT…AAAAWKALEV (69 aa)) enclose the DRBM domain.

Belongs to the ribonuclease III family. In terms of assembly, homodimer. Requires Mg(2+) as cofactor.

It localises to the cytoplasm. The enzyme catalyses Endonucleolytic cleavage to 5'-phosphomonoester.. In terms of biological role, digests double-stranded RNA. Involved in the processing of primary rRNA transcript to yield the immediate precursors to the large and small rRNAs (23S and 16S). Processes some mRNAs, and tRNAs when they are encoded in the rRNA operon. Processes pre-crRNA and tracrRNA of type II CRISPR loci if present in the organism. This is Ribonuclease 3 from Mycobacterium bovis (strain ATCC BAA-935 / AF2122/97).